A 366-amino-acid chain; its full sequence is Chorismate synthase (366 aa).

Residues Arg-48 and Arg-54 each coordinate NADP(+). Residues 125 to 127 (RSS), 238 to 239 (NA), Gly-278, 293 to 297 (KPTSS), and Arg-319 contribute to the FMN site.

This sequence belongs to the chorismate synthase family. Homotetramer. It depends on FMNH2 as a cofactor.

It catalyses the reaction 5-O-(1-carboxyvinyl)-3-phosphoshikimate = chorismate + phosphate. It functions in the pathway metabolic intermediate biosynthesis; chorismate biosynthesis; chorismate from D-erythrose 4-phosphate and phosphoenolpyruvate: step 7/7. Catalyzes the anti-1,4-elimination of the C-3 phosphate and the C-6 proR hydrogen from 5-enolpyruvylshikimate-3-phosphate (EPSP) to yield chorismate, which is the branch point compound that serves as the starting substrate for the three terminal pathways of aromatic amino acid biosynthesis. This reaction introduces a second double bond into the aromatic ring system. The protein is Chorismate synthase of Ralstonia pickettii (strain 12J).